Consider the following 259-residue polypeptide: Small ribosomal subunit protein eS1 (259 aa).

2 disordered regions span residues 1 to 23 and 235 to 259; these read MAVGGQKKVTKGGKKGGKKKTAD and ESKSTAPGETVSRPDHYEPPKVDSV. The segment covering 8-19 has biased composition (basic residues); it reads KVTKGGKKGGKK. Residues 246 to 259 show a composition bias toward basic and acidic residues; sequence SRPDHYEPPKVDSV.

Belongs to the eukaryotic ribosomal protein eS1 family. In terms of assembly, component of the small ribosomal subunit. Mature ribosomes consist of a small (40S) and a large (60S) subunit. The 40S subunit contains about 33 different proteins and 1 molecule of RNA (18S). The 60S subunit contains about 49 different proteins and 3 molecules of RNA (28S, 5.8S and 5S).

It is found in the cytoplasm. The sequence is that of Small ribosomal subunit protein eS1 from Schistosoma japonicum (Blood fluke).